The sequence spans 376 residues: Formate dehydrogenase 1 (376 aa).

The substrate site is built by Val97 and Asn121. NAD(+) contacts are provided by residues 176–177 (RI), Asp197, 244–248 (PLHKD), Thr270, Asp296, and 325–328 (HISG).

This sequence belongs to the D-isomer specific 2-hydroxyacid dehydrogenase family. FDH subfamily. Homodimer.

It is found in the cytoplasm. The enzyme catalyses formate + NAD(+) = CO2 + NADH. Functionally, catalyzes the NAD(+)-dependent oxidation of formate to carbon dioxide. Formate oxidation is the final step in the methanol oxidation pathway in methylotrophic microorganisms. Has a role in the detoxification of exogenous formate in non-methylotrophic organisms. The protein is Formate dehydrogenase 1 (FDH1) of Saccharomyces cerevisiae (strain YJM789) (Baker's yeast).